We begin with the raw amino-acid sequence, 616 residues long: Dihydroxy-acid dehydratase (616 aa).

A Mg(2+)-binding site is contributed by D81. Position 122 (C122) interacts with [2Fe-2S] cluster. Mg(2+) is bound by residues D123 and K124. At K124 the chain carries N6-carboxylysine. C195 provides a ligand contact to [2Fe-2S] cluster. E491 contributes to the Mg(2+) binding site. Residue S517 is the Proton acceptor of the active site.

It belongs to the IlvD/Edd family. As to quaternary structure, homodimer. Requires [2Fe-2S] cluster as cofactor. It depends on Mg(2+) as a cofactor.

It catalyses the reaction (2R)-2,3-dihydroxy-3-methylbutanoate = 3-methyl-2-oxobutanoate + H2O. It carries out the reaction (2R,3R)-2,3-dihydroxy-3-methylpentanoate = (S)-3-methyl-2-oxopentanoate + H2O. The protein operates within amino-acid biosynthesis; L-isoleucine biosynthesis; L-isoleucine from 2-oxobutanoate: step 3/4. It functions in the pathway amino-acid biosynthesis; L-valine biosynthesis; L-valine from pyruvate: step 3/4. Functions in the biosynthesis of branched-chain amino acids. Catalyzes the dehydration of (2R,3R)-2,3-dihydroxy-3-methylpentanoate (2,3-dihydroxy-3-methylvalerate) into 2-oxo-3-methylpentanoate (2-oxo-3-methylvalerate) and of (2R)-2,3-dihydroxy-3-methylbutanoate (2,3-dihydroxyisovalerate) into 2-oxo-3-methylbutanoate (2-oxoisovalerate), the penultimate precursor to L-isoleucine and L-valine, respectively. This chain is Dihydroxy-acid dehydratase, found in Klebsiella pneumoniae subsp. pneumoniae (strain ATCC 700721 / MGH 78578).